We begin with the raw amino-acid sequence, 166 residues long: Phospholipase A2 inhibitor A1 (166 aa).

Positions 1–19 (MRLILLSGLLLLGIFLANG) are cleaved as a signal peptide. Positions 46 to 161 (LKGSFLIVHK…CDDNLLVVCE (116 aa)) constitute a C-type lectin domain. 2 disulfides stabilise this stretch: Cys-83/Cys-160 and Cys-138/Cys-152. A glycan (N-linked (GlcNAc...) asparagine) is linked at Asn-122.

The protein belongs to the alpha-type phospholipase A2 inhibitor family. In terms of assembly, homotrimer; non-covalently linked. Expressed by the liver.

The protein localises to the secreted. This phospholipase A2 inhibitor binds directly phospholipase A2 in the presence or absence of calcium. The polypeptide is Phospholipase A2 inhibitor A1 (Bothrops neuwiedi (Neuwied's lancehead)).